We begin with the raw amino-acid sequence, 40 residues long: Metallothionein-1 (40 aa).

Belongs to the metallothionein superfamily. Type 5 family.

Its function is as follows. This protein binds cations of several transition elements. It is thought to be involved in detoxification processes. This chain is Metallothionein-1 (MtnA), found in Drosophila melanogaster (Fruit fly).